A 518-amino-acid polypeptide reads, in one-letter code: Glutamate--cysteine ligase (518 aa).

The protein belongs to the glutamate--cysteine ligase type 1 family. Type 1 subfamily.

The enzyme catalyses L-cysteine + L-glutamate + ATP = gamma-L-glutamyl-L-cysteine + ADP + phosphate + H(+). The protein operates within sulfur metabolism; glutathione biosynthesis; glutathione from L-cysteine and L-glutamate: step 1/2. This is Glutamate--cysteine ligase from Salmonella agona (strain SL483).